The primary structure comprises 537 residues: Bifunctional purine biosynthesis protein PurH (537 aa).

In terms of domain architecture, MGS-like spans 8 to 158 (IPAPDLVPVR…KNHAYVAVVT (151 aa)).

Belongs to the PurH family.

The catalysed reaction is (6R)-10-formyltetrahydrofolate + 5-amino-1-(5-phospho-beta-D-ribosyl)imidazole-4-carboxamide = 5-formamido-1-(5-phospho-D-ribosyl)imidazole-4-carboxamide + (6S)-5,6,7,8-tetrahydrofolate. It catalyses the reaction IMP + H2O = 5-formamido-1-(5-phospho-D-ribosyl)imidazole-4-carboxamide. It participates in purine metabolism; IMP biosynthesis via de novo pathway; 5-formamido-1-(5-phospho-D-ribosyl)imidazole-4-carboxamide from 5-amino-1-(5-phospho-D-ribosyl)imidazole-4-carboxamide (10-formyl THF route): step 1/1. The protein operates within purine metabolism; IMP biosynthesis via de novo pathway; IMP from 5-formamido-1-(5-phospho-D-ribosyl)imidazole-4-carboxamide: step 1/1. This is Bifunctional purine biosynthesis protein PurH from Chelativorans sp. (strain BNC1).